A 197-amino-acid polypeptide reads, in one-letter code: Isopentenyl-diphosphate Delta-isomerase (197 aa).

Residues His41 and His48 each contribute to the Mn(2+) site. Positions 46 to 183 (QLHRAFSVFL…SWFMTVLDAA (138 aa)) constitute a Nudix hydrolase domain. Residue Cys83 is part of the active site. Position 83 (Cys83) interacts with Mg(2+). His85 contacts Mn(2+). Mg(2+) is bound at residue Glu103. Positions 130 and 132 each coordinate Mn(2+). Glu132 is a catalytic residue.

It belongs to the IPP isomerase type 1 family. Mg(2+) is required as a cofactor. It depends on Mn(2+) as a cofactor.

The protein localises to the cytoplasm. It catalyses the reaction isopentenyl diphosphate = dimethylallyl diphosphate. It participates in isoprenoid biosynthesis; dimethylallyl diphosphate biosynthesis; dimethylallyl diphosphate from isopentenyl diphosphate: step 1/1. Catalyzes the 1,3-allylic rearrangement of the homoallylic substrate isopentenyl (IPP) to its highly electrophilic allylic isomer, dimethylallyl diphosphate (DMAPP). The sequence is that of Isopentenyl-diphosphate Delta-isomerase from Streptomyces avermitilis (strain ATCC 31267 / DSM 46492 / JCM 5070 / NBRC 14893 / NCIMB 12804 / NRRL 8165 / MA-4680).